The primary structure comprises 264 residues: Merozoite surface protein 2 (264 aa).

The first 20 residues, 1–20 (MKVIKTLSIINFFIFVTFNI), serve as a signal peptide directing secretion. N-linked (GlcNAc...) asparagine glycosylation is found at Asn-22 and Asn-36. Positions 44-190 (ANEGSNTNSV…PQTAENENPA (147 aa)) are polymorphic region. The interval 46-225 (EGSNTNSVGA…DSQKECTDGN (180 aa)) is disordered. 2 tandem repeats follow at residues 60–91 (ADTI…TPTA) and 92–123 (ADTI…TPTA). Residues 60–123 (ADTIASGSQR…GESQTTTPTA (64 aa)) are 2 X 32 AA perfects repeats. The segment covering 70 to 81 (STNSASTSTTNN) has biased composition (low complexity). The span at 82 to 101 (GESQTTTPTAADTIASGSQR) shows a compositional bias: polar residues. The segment covering 102 to 145 (STNSASTSTTNNGESQTTTPTAADTPTTTESNSPSPPITTTESS) has biased composition (low complexity). Asn-152 carries an N-linked (GlcNAc...) asparagine glycan. Over residues 154 to 166 (TDGKGEESEKQNE) the composition is skewed to basic and acidic residues. 2 N-linked (GlcNAc...) asparagine glycosylation sites follow: Asn-168 and Asn-213. Cys-221 and Cys-229 form a disulfide bridge. 2 N-linked (GlcNAc...) asparagine glycosylation sites follow: Asn-237 and Asn-238. The GPI-anchor amidated asparagine moiety is linked to residue Asn-238. Positions 239–264 (SSNIASINKFVVLISATLVLSFAIFI) are cleaved as a propeptide — removed in mature form.

It localises to the cell membrane. Functionally, may play a role in the merozoite attachment to the erythrocyte. The chain is Merozoite surface protein 2 from Plasmodium falciparum (isolate fid3 / India).